A 593-amino-acid chain; its full sequence is MGKKSRVKTQKSGTGATAAVSPKELLNLTSELLQKCSSPTPGPGKEWEEYIQIRSLVEKIRKKQKGLSVVFDGKRDDYFPELIKWATENGASTEGFEIANFEEEGFGLKATREIKAEELFLWVPRKLLMTVESAKNSVLGSLYSQDRILQAMGNITLAFHLLCERANPNSFWLPYIQTLPSEYDTPLYFEEDEVQYLRSTQAIHDVFSQYKNTARQYAYFYKVIQTHPNASKLPLKDSFTYDDYRWAVSSVMTRQNQIPTEDGSRVTLALIPLWDMCNHTNGLITTGYNLEDDRCECVALQDFKAGEQIYIFYGTRSNAEFVIHSGFFFDNNSHDRVKIKLGVSKSDRLYAMKAEVLARAGIPTSSVFALHSIEPPISAQLLAFLRVFCMNEEELKEHLIGEHAIDKIFTLGNSEFPISWDNEVKLWTFLEARASLLLKTYKTTVEDDKSFLETHDLTSHATMAIKLRLGEKEILEKAVKSAAASREYYTKQMADGAPLPKYEESNIALLENTVADSRLPIVLRNLDDVEEQGDLKIDEAMDAEVTENGFVNGENSLFNGTKSESENLIKEESNRETEDAKESSSESTDEVKE.

The disordered stretch occupies residues 1–21; the sequence is MGKKSRVKTQKSGTGATAAVS. S-adenosyl-L-methionine is bound by residues R75, 104–106, R254, 275–279, and 325–327; these read EGF, DMCNH, and SGF. In terms of domain architecture, SET spans 94–314; sequence EGFEIANFEE…AGEQIYIFYG (221 aa). The tract at residues 549 to 593 is disordered; it reads GFVNGENSLFNGTKSESENLIKEESNRETEDAKESSSESTDEVKE. Positions 553–562 are enriched in polar residues; the sequence is GENSLFNGTK. The span at 563 to 593 shows a compositional bias: basic and acidic residues; sequence SESENLIKEESNRETEDAKESSSESTDEVKE.

The protein belongs to the class V-like SAM-binding methyltransferase superfamily. SETD3 actin-histidine methyltransferase family.

Its subcellular location is the cytoplasm. The enzyme catalyses L-histidyl-[protein] + S-adenosyl-L-methionine = N(tele)-methyl-L-histidyl-[protein] + S-adenosyl-L-homocysteine + H(+). Its function is as follows. Protein-histidine N-methyltransferase that specifically mediates 3-methylhistidine (tele-methylhistidine) methylation of actin at 'His-73'. Does not have protein-lysine N-methyltransferase activity and probably only catalyzes histidine methylation of actin. The protein is Actin-histidine N-methyltransferase of Gallus gallus (Chicken).